Reading from the N-terminus, the 344-residue chain is uncharacterized protein (344 aa).

The Cytoplasmic segment spans residues 1 to 98; it reads MIDFVKSRDT…NNDEIGIWNY (98 aa). The helical transmembrane segment at 99–119 threads the bilayer; sequence ISVAEMGGVLLFLSYWIWTCL. Residue H120 is a topological domain, lumenal. A helical membrane pass occupies residues 121-141; it reads FSKIIFPAQKVICLYIFLFAL. Residues 142–169 are Cytoplasmic-facing; it reads NQTLQECIEEYVFSSECIKYRQFYSVYE. Residues 170–192 form a helical membrane-spanning segment; sequence IIDFLRTNFYRLFVIYCALGFGI. At 193–198 the chain is on the lumenal side; that stretch reads TRTVPK. Residues 199–219 form a helical membrane-spanning segment; it reads YLMIKGISIVIALCSVYWISL. Residues 220–222 are Cytoplasmic-facing; that stretch reads YKD. A helical membrane pass occupies residues 223–243; that stretch reads VYVVSEIFDMIQYEVFPAIWV. Topologically, residues 244–273 are lumenal; the sequence is YSICHLLKQCTSVTTYENASKARFFRRMLN. The chain crosses the membrane as a helical span at residues 274–294; that stretch reads AFIFIFCASPMLHYLSNIIFG. The Cytoplasmic portion of the chain corresponds to 295-344; the sequence is NFDYRLSVIIGDLFTFMEKIAFPCYIMFPTHNEALAYNRNVAEEAQEKMI.

Its subcellular location is the endoplasmic reticulum membrane. This is an uncharacterized protein from Schizosaccharomyces pombe (strain 972 / ATCC 24843) (Fission yeast).